A 343-amino-acid polypeptide reads, in one-letter code: N-acetyl-gamma-glutamyl-phosphate reductase (343 aa).

Residue cysteine 146 is part of the active site.

Belongs to the NAGSA dehydrogenase family. Type 1 subfamily.

It is found in the cytoplasm. It catalyses the reaction N-acetyl-L-glutamate 5-semialdehyde + phosphate + NADP(+) = N-acetyl-L-glutamyl 5-phosphate + NADPH + H(+). Its pathway is amino-acid biosynthesis; L-arginine biosynthesis; N(2)-acetyl-L-ornithine from L-glutamate: step 3/4. Its function is as follows. Catalyzes the NADPH-dependent reduction of N-acetyl-5-glutamyl phosphate to yield N-acetyl-L-glutamate 5-semialdehyde. The polypeptide is N-acetyl-gamma-glutamyl-phosphate reductase (Acidothermus cellulolyticus (strain ATCC 43068 / DSM 8971 / 11B)).